The following is a 334-amino-acid chain: SH3 and cysteine-rich domain-containing protein 3 (334 aa).

The segment at 1-26 (MAQYDQLEDKDSLDIHDNPPAPENVV) is disordered. The segment covering 7–17 (LEDKDSLDIHD) has biased composition (basic and acidic residues). A Phorbol-ester/DAG-type zinc finger spans residues 62 to 113 (PHKFKDHYCKKPKFCDVCARMIVLNNKFALRCKNCKTNIHHSCQSYVQFQRC). Residues 178–190 (EEEAQQPKEDEEG) are compositionally biased toward acidic residues. Residues 178–215 (EEEAQQPKEDEEGAEGKQDGDKKDKTATDDKNKKQQQT) are disordered. Basic and acidic residues predominate over residues 191-210 (AEGKQDGDKKDKTATDDKNK). SH3 domains follow at residues 217 to 276 (SQSH…RVRA) and 277 to 334 (GERV…LHEL).

In terms of assembly, component of a calcium channel complex with CACNA1S. Expressed in muscles at the muscle triad.

Its subcellular location is the cytoplasm. The protein localises to the cell membrane. It localises to the sarcolemma. It is found in the T-tubule. Its function is as follows. Required for normal excitation-contraction coupling in skeletal muscle and for normal muscle contraction in response to membrane depolarization. Required for normal Ca(2+) release from the sarcplasmic reticulum, which ultimately leads to muscle contraction. Probably functions via its effects on muscle calcium channels. Increases CACNA1S channel activity, in addition to its role in enhancing the expression of CACNA1S at the cell membrane. Has a redundant role in promoting the expression of the calcium channel CACNA1S at the cell membrane. The polypeptide is SH3 and cysteine-rich domain-containing protein 3 (Danio rerio (Zebrafish)).